Consider the following 133-residue polypeptide: Aspartate 1-decarboxylase (133 aa).

The Schiff-base intermediate with substrate; via pyruvic acid role is filled by Ser-26. The residue at position 26 (Ser-26) is a Pyruvic acid (Ser). Thr-58 contributes to the substrate binding site. Catalysis depends on Tyr-59, which acts as the Proton donor. 74 to 76 (GAA) serves as a coordination point for substrate.

The protein belongs to the PanD family. As to quaternary structure, heterooctamer of four alpha and four beta subunits. Pyruvate is required as a cofactor. Is synthesized initially as an inactive proenzyme, which is activated by self-cleavage at a specific serine bond to produce a beta-subunit with a hydroxyl group at its C-terminus and an alpha-subunit with a pyruvoyl group at its N-terminus.

The protein localises to the cytoplasm. It carries out the reaction L-aspartate + H(+) = beta-alanine + CO2. Its pathway is cofactor biosynthesis; (R)-pantothenate biosynthesis; beta-alanine from L-aspartate: step 1/1. In terms of biological role, catalyzes the pyruvoyl-dependent decarboxylation of aspartate to produce beta-alanine. In Legionella pneumophila (strain Lens), this protein is Aspartate 1-decarboxylase.